Here is a 356-residue protein sequence, read N- to C-terminus: GTPase Obg (356 aa).

One can recognise an Obg domain in the interval 1-159; sequence MKFLDEAKVY…RWIWLRMKLI (159 aa). Residues 160 to 327 form the OBG-type G domain; that stretch reads ADAGLVGLPN…VLRALTDVIS (168 aa). Residues 166–173, 191–195, 212–215, 279–282, and 308–310 each bind GTP; these read GLPNAGKS, FTTLH, DIPG, NKID, and SGV. The Mg(2+) site is built by Ser-173 and Thr-193. A disordered region spans residues 329–356; it reads APVSTKAKGEPTENETPPPSTGWSPLSN.

This sequence belongs to the TRAFAC class OBG-HflX-like GTPase superfamily. OBG GTPase family. As to quaternary structure, monomer. Mg(2+) serves as cofactor.

It is found in the cytoplasm. Its function is as follows. An essential GTPase which binds GTP, GDP and possibly (p)ppGpp with moderate affinity, with high nucleotide exchange rates and a fairly low GTP hydrolysis rate. Plays a role in control of the cell cycle, stress response, ribosome biogenesis and in those bacteria that undergo differentiation, in morphogenesis control. This chain is GTPase Obg, found in Afipia carboxidovorans (strain ATCC 49405 / DSM 1227 / KCTC 32145 / OM5) (Oligotropha carboxidovorans).